The chain runs to 148 residues: NADH-quinone oxidoreductase subunit K 2 (148 aa).

3 helical membrane-spanning segments follow: residues 3 to 23 (LAYPAVLAALLFCVGLYGVLA), 28 to 48 (ILVLMSVELMLNAVNLNLVAF), and 64 to 84 (LFTIAIAAAEIGIGLAIVLAV). Positions 96–148 (LRDTAETDAAETLPDDAGTGPSGTDAAPNGDTTTATGRPGDNAGKNKKAEATR) are disordered.

Belongs to the complex I subunit 4L family. As to quaternary structure, NDH-1 is composed of 14 different subunits. Subunits NuoA, H, J, K, L, M, N constitute the membrane sector of the complex.

It is found in the cell membrane. The enzyme catalyses a quinone + NADH + 5 H(+)(in) = a quinol + NAD(+) + 4 H(+)(out). Functionally, NDH-1 shuttles electrons from NADH, via FMN and iron-sulfur (Fe-S) centers, to quinones in the respiratory chain. The immediate electron acceptor for the enzyme in this species is believed to be a menaquinone. Couples the redox reaction to proton translocation (for every two electrons transferred, four hydrogen ions are translocated across the cytoplasmic membrane), and thus conserves the redox energy in a proton gradient. The sequence is that of NADH-quinone oxidoreductase subunit K 2 from Streptomyces griseus subsp. griseus (strain JCM 4626 / CBS 651.72 / NBRC 13350 / KCC S-0626 / ISP 5235).